The following is a 305-amino-acid chain: Homoserine kinase (305 aa).

93–103 (PLARGLGSSAT) is a binding site for ATP.

It belongs to the GHMP kinase family. Homoserine kinase subfamily.

The protein resides in the cytoplasm. It carries out the reaction L-homoserine + ATP = O-phospho-L-homoserine + ADP + H(+). It participates in amino-acid biosynthesis; L-threonine biosynthesis; L-threonine from L-aspartate: step 4/5. Functionally, catalyzes the ATP-dependent phosphorylation of L-homoserine to L-homoserine phosphate. The protein is Homoserine kinase of Trichodesmium erythraeum (strain IMS101).